A 93-amino-acid chain; its full sequence is Large ribosomal subunit protein uL23 (93 aa).

This sequence belongs to the universal ribosomal protein uL23 family. As to quaternary structure, part of the 50S ribosomal subunit. Contacts protein L29, and trigger factor when it is bound to the ribosome.

In terms of biological role, one of the early assembly proteins it binds 23S rRNA. One of the proteins that surrounds the polypeptide exit tunnel on the outside of the ribosome. Forms the main docking site for trigger factor binding to the ribosome. This Sulfurovum sp. (strain NBC37-1) protein is Large ribosomal subunit protein uL23.